Consider the following 111-residue polypeptide: Large ribosomal subunit protein uL22 (111 aa).

The protein belongs to the universal ribosomal protein uL22 family. Part of the 50S ribosomal subunit.

This protein binds specifically to 23S rRNA; its binding is stimulated by other ribosomal proteins, e.g. L4, L17, and L20. It is important during the early stages of 50S assembly. It makes multiple contacts with different domains of the 23S rRNA in the assembled 50S subunit and ribosome. Its function is as follows. The globular domain of the protein is located near the polypeptide exit tunnel on the outside of the subunit, while an extended beta-hairpin is found that lines the wall of the exit tunnel in the center of the 70S ribosome. The polypeptide is Large ribosomal subunit protein uL22 (Clostridium acetobutylicum (strain ATCC 824 / DSM 792 / JCM 1419 / IAM 19013 / LMG 5710 / NBRC 13948 / NRRL B-527 / VKM B-1787 / 2291 / W)).